Here is a 206-residue protein sequence, read N- to C-terminus: Threonine efflux protein (206 aa).

The chain crosses the membrane as a helical span at residues 1–21 (MLMLFFTVAMVHIVALMSPGP). The Periplasmic segment spans residues 22-43 (DFFFVSQTAVSRSRKEAMMGVL). Residues 44-64 (GITCGVMVWAGVALLGLHLII) traverse the membrane as a helical segment. Residues 65–66 (EK) lie on the Cytoplasmic side of the membrane. Residues 67–87 (MAWLHTIIMVGGGLYLCWMGY) traverse the membrane as a helical segment. Residues 88–149 (QMLRGALKKQ…VGDNVGAAAR (62 aa)) are Periplasmic-facing. The helical transmembrane segment at 150–173 (WGIFALITLETLAWFTVVASLFAL) threads the bilayer. The Cytoplasmic segment spans residues 174–206 (PKMRRGYQRLAKWIDGFAGALFAGFGIHLIISR).

Belongs to the Rht family.

It is found in the cell inner membrane. Its function is as follows. Conducts the efflux of threonine. This chain is Threonine efflux protein (rhtC), found in Salmonella typhi.